The following is a 366-amino-acid chain: MTVTTPDALLAPHDVQHAGADESAAQIRKPRDNNDPRNANRGGGNGKPRRDKRDVHGWVVLDKPIGMTSTQAVAVLKRLFSAKRAGHAGTLDPLASGGLPIAMGEATKTVPFVMDGRKRYRFTVAWGEERDTDDTEGRAVATSPDRPTAEAIRALLPRFTGVIEQVPPQYSAVKIQGERAYDLARDGEVVPLVPRPVEIHELTLVEHGDDGRSVFEAECGKGTYVRALARDMGRLLGCYGHICALRRTVVGPFDESDMIPLEELQALCDRAASGEGSLADALLPVETALDDIPALAVTRADAARLHRGQAVLLRGRDAPHCSGTVYVTVAGRLLALAEVGNGELIPKRVFNLTGLTASSAVRKESI.

The segment at 1 to 55 (MTVTTPDALLAPHDVQHAGADESAAQIRKPRDNNDPRNANRGGGNGKPRRDKRDV) is disordered. Aspartate 92 functions as the Nucleophile in the catalytic mechanism.

Belongs to the pseudouridine synthase TruB family. Type 1 subfamily.

The catalysed reaction is uridine(55) in tRNA = pseudouridine(55) in tRNA. Its function is as follows. Responsible for synthesis of pseudouridine from uracil-55 in the psi GC loop of transfer RNAs. This Rhodopseudomonas palustris (strain ATCC BAA-98 / CGA009) protein is tRNA pseudouridine synthase B.